We begin with the raw amino-acid sequence, 78 residues long: Major outer membrane lipoprotein Lpp (78 aa).

The N-terminal stretch at 1-20 is a signal peptide; sequence MNRTKLVLGAVILGSTLLAG. C21 is lipidated: N-palmitoyl cysteine. C21 is lipidated: S-diacylglycerol cysteine. Repeats lie at residues 24–34 and 38–48; these read NAKIDQLSSDV and NAKVDQLSNDV. A coiled-coil region spans residues 27–75; sequence IDQLSSDVQTLNAKVDQLSNDVNAIRSDVQAAKDDAARANQRLDNQVRT. K78 bears the N6-murein peptidoglycan lysine mark.

Belongs to the Lpp family. Homotrimer.

Its subcellular location is the cell outer membrane. The protein localises to the secreted. It is found in the cell wall. A highly abundant outer membrane lipoprotein that controls the distance between the inner and outer membranes. The only protein known to be covalently linked to the peptidoglycan network (PGN). Also non-covalently binds the PGN. The link between the cell outer membrane and PGN contributes to maintenance of the structural and functional integrity of the cell envelope, and maintains the correct distance between the PGN and the outer membrane. This chain is Major outer membrane lipoprotein Lpp, found in Pectobacterium atrosepticum (strain SCRI 1043 / ATCC BAA-672) (Erwinia carotovora subsp. atroseptica).